The chain runs to 331 residues: tRNA (guanine-N(7)-)-methyltransferase (331 aa).

3 residues coordinate S-adenosyl-L-methionine: Glu29, Glu55, and Asp105. The active site involves Asp105. Positions 109 and 141 each coordinate substrate.

It belongs to the class I-like SAM-binding methyltransferase superfamily. TrmB family.

It carries out the reaction guanosine(46) in tRNA + S-adenosyl-L-methionine = N(7)-methylguanosine(46) in tRNA + S-adenosyl-L-homocysteine. It participates in tRNA modification; N(7)-methylguanine-tRNA biosynthesis. Functionally, catalyzes the formation of N(7)-methylguanine at position 46 (m7G46) in tRNA. This chain is tRNA (guanine-N(7)-)-methyltransferase, found in Deinococcus geothermalis (strain DSM 11300 / CIP 105573 / AG-3a).